The chain runs to 73 residues: Small ribosomal subunit protein bS18c (73 aa).

The protein belongs to the bacterial ribosomal protein bS18 family. As to quaternary structure, part of the 30S ribosomal subunit.

Its subcellular location is the plastid. It is found in the chloroplast. The sequence is that of Small ribosomal subunit protein bS18c from Nephroselmis olivacea (Green alga).